The following is a 242-amino-acid chain: Uridylate kinase (242 aa).

11-14 (KLSG) is an ATP binding site. Gly-53 contacts UMP. ATP is bound by residues Gly-54 and Arg-58. UMP is bound by residues Asp-73 and 134-141 (SGNPFFTT). Residues Thr-161, Tyr-167, and Asp-170 each contribute to the ATP site.

This sequence belongs to the UMP kinase family. As to quaternary structure, homohexamer.

It is found in the cytoplasm. It catalyses the reaction UMP + ATP = UDP + ADP. The protein operates within pyrimidine metabolism; CTP biosynthesis via de novo pathway; UDP from UMP (UMPK route): step 1/1. With respect to regulation, inhibited by UTP. Functionally, catalyzes the reversible phosphorylation of UMP to UDP. The polypeptide is Uridylate kinase (Thermosynechococcus vestitus (strain NIES-2133 / IAM M-273 / BP-1)).